Reading from the N-terminus, the 153-residue chain is Aspartate carbamoyltransferase regulatory chain (153 aa).

The Zn(2+) site is built by C109, C114, C138, and C141.

This sequence belongs to the PyrI family. Contains catalytic and regulatory chains. It depends on Zn(2+) as a cofactor.

Involved in allosteric regulation of aspartate carbamoyltransferase. This chain is Aspartate carbamoyltransferase regulatory chain, found in Salmonella paratyphi A (strain ATCC 9150 / SARB42).